We begin with the raw amino-acid sequence, 320 residues long: Cytochrome f (320 aa).

A signal peptide spans 1 to 35; sequence MQTRNTFSWIREEITRSISVSLMIYIITWASISSA. Residues Tyr36, Cys56, Cys59, and His60 each contribute to the heme site. Residues 286–306 traverse the membrane as a helical segment; sequence VQGLLFFLGSVVLAQIFLVLK.

It belongs to the cytochrome f family. The 4 large subunits of the cytochrome b6-f complex are cytochrome b6, subunit IV (17 kDa polypeptide, petD), cytochrome f and the Rieske protein, while the 4 small subunits are PetG, PetL, PetM and PetN. The complex functions as a dimer. Requires heme as cofactor.

It localises to the plastid. Its subcellular location is the chloroplast thylakoid membrane. In terms of biological role, component of the cytochrome b6-f complex, which mediates electron transfer between photosystem II (PSII) and photosystem I (PSI), cyclic electron flow around PSI, and state transitions. This chain is Cytochrome f, found in Barbarea verna (Land cress).